We begin with the raw amino-acid sequence, 239 residues long: Small ribosomal subunit protein eS4 (239 aa).

The region spanning Ile37–Asp99 is the S4 RNA-binding domain.

This sequence belongs to the eukaryotic ribosomal protein eS4 family.

In Saccharolobus islandicus (strain Y.N.15.51 / Yellowstone #2) (Sulfolobus islandicus), this protein is Small ribosomal subunit protein eS4.